A 609-amino-acid polypeptide reads, in one-letter code: DNA mismatch repair protein MutL (609 aa).

A disordered region spans residues 364–386; it reads SVNSKPTDYRPAMSPSFKSTPNT.

Belongs to the DNA mismatch repair MutL/HexB family.

Functionally, this protein is involved in the repair of mismatches in DNA. It is required for dam-dependent methyl-directed DNA mismatch repair. May act as a 'molecular matchmaker', a protein that promotes the formation of a stable complex between two or more DNA-binding proteins in an ATP-dependent manner without itself being part of a final effector complex. This is DNA mismatch repair protein MutL from Rickettsia akari (strain Hartford).